A 152-amino-acid chain; its full sequence is Large ribosomal subunit protein bL9 (152 aa).

Belongs to the bacterial ribosomal protein bL9 family.

Binds to the 23S rRNA. This chain is Large ribosomal subunit protein bL9, found in Nostoc punctiforme (strain ATCC 29133 / PCC 73102).